A 636-amino-acid polypeptide reads, in one-letter code: Zinc finger protein 90 (636 aa).

The region spanning 14–85 is the KRAB domain; that stretch reads VTFKDVAVNF…EKEIQRPFCP (72 aa). 7 C2H2-type zinc fingers span residues 208–230, 250–272, 278–300, 306–328, 334–356, 362–384, and 390–412; these read YKCD…EKIH, HECA…QRIH, FECN…ENAH, YQCS…QRIH, YRCN…EVTH, FQCK…ERTH, and FECS…MRIH. The segment at 227–247 is disordered; that stretch reads EKIHKGDPYSNGTDQGAQSGR. Lysine 444 participates in a covalent cross-link: Glycyl lysine isopeptide (Lys-Gly) (interchain with G-Cter in SUMO2). 6 consecutive C2H2-type zinc fingers follow at residues 446–468, 494–516, 522–544, 550–572, 578–600, and 606–628; these read YHCN…QRLH, YQCN…HRIH, YECN…ERTH, YECI…ERTH, YECN…QRTH, and YACK…HRVH.

Belongs to the krueppel C2H2-type zinc-finger protein family. Interacts (via N- and C-termini) with REST (via zinc-finger DNA-binding domain); the interaction inhibits REST repressor activity. In terms of tissue distribution, brain, spleen, thymus, and testis. Expressed in heart.

It localises to the nucleus. Functionally, inhibits the transcriptional repressor activity of REST by inhibiting its binding to DNA, thereby derepressing transcription of REST target genes. The protein is Zinc finger protein 90 (Zfp90) of Mus musculus (Mouse).